We begin with the raw amino-acid sequence, 285 residues long: Vacuolar protein sorting-associated protein 37B (285 aa).

The interval 50-170 is interaction with IST1; it reads ASNRSLAEGN…ELVLKGQRHP (121 aa). A VPS37 C-terminal domain is found at 84 to 173; that stretch reads FEAYQIKKTK…LKGQRHPQAG (90 aa). 2 disordered regions span residues 167–215 and 242–285; these read QRHP…PPVP and PLPP…FILQ. Composition is skewed to pro residues over residues 173-184 and 206-215; these read GAPPPPRVPEPS and RIPPPPPPVP. Polar residues predominate over residues 250-259; that stretch reads PSQQGFSAQL. Pro residues predominate over residues 262–275; it reads PYPPALPQRPPPRM. Positions 276 to 285 are enriched in low complexity; that stretch reads APHQPGFILQ.

This sequence belongs to the VPS37 family. Component of the ESCRT-I complex (endosomal sorting complex required for transport I) which consists of TSG101, VPS28, a VPS37 protein (VPS37A to -D) and MVB12A or MVB12B in a 1:1:1:1 stoichiometry. Interacts with TSG101, VPS28, MVB12A and MVB12B. Component of the ESCRT-I complex (endosomal sorting complex required for transport I) which consists of TSG101, VPS28, a VPS37 protein (VPS37A to -D) and UBAP1 in a 1:1:1:1 stoichiometry. Interacts with CEP55. Interacts with IST1.

It is found in the late endosome membrane. In terms of biological role, component of the ESCRT-I complex, a regulator of vesicular trafficking process. Required for the sorting of endocytic ubiquitinated cargos into multivesicular bodies. May be involved in cell growth and differentiation. This is Vacuolar protein sorting-associated protein 37B (Vps37b) from Mus musculus (Mouse).